A 636-amino-acid chain; its full sequence is 1-deoxy-D-xylulose-5-phosphate synthase (636 aa).

Thiamine diphosphate-binding positions include histidine 75 and 116-118; that span reads AHS. Aspartate 147 is a Mg(2+) binding site. Thiamine diphosphate is bound by residues 148-149, asparagine 177, tyrosine 288, and glutamate 370; that span reads GA. Mg(2+) is bound at residue asparagine 177.

The protein belongs to the transketolase family. DXPS subfamily. In terms of assembly, homodimer. Mg(2+) is required as a cofactor. Thiamine diphosphate serves as cofactor.

It catalyses the reaction D-glyceraldehyde 3-phosphate + pyruvate + H(+) = 1-deoxy-D-xylulose 5-phosphate + CO2. The protein operates within metabolic intermediate biosynthesis; 1-deoxy-D-xylulose 5-phosphate biosynthesis; 1-deoxy-D-xylulose 5-phosphate from D-glyceraldehyde 3-phosphate and pyruvate: step 1/1. Its function is as follows. Catalyzes the acyloin condensation reaction between C atoms 2 and 3 of pyruvate and glyceraldehyde 3-phosphate to yield 1-deoxy-D-xylulose-5-phosphate (DXP). In Ralstonia pickettii (strain 12J), this protein is 1-deoxy-D-xylulose-5-phosphate synthase.